The chain runs to 318 residues: Olfactory receptor 2A2 (318 aa).

Residues 1–24 are Extracellular-facing; it reads MEGNQTWITDITLLGFQVGPALAI. N-linked (GlcNAc...) asparagine glycosylation is present at Asn4. Residues 25–48 traverse the membrane as a helical segment; sequence LLCGLFSVFYTLTLLGNGVIFGII. Topologically, residues 49–56 are cytoplasmic; the sequence is CLDSKLHT. A helical membrane pass occupies residues 57-78; it reads PMYFFLSHLAIIDMSYASNNVP. Residues 79 to 99 are Extracellular-facing; it reads KMLANLMNQKRTISFVPCIMQ. A helical transmembrane segment spans residues 100 to 119; it reads TFLYLAFAVTECLILVVMSY. Over 120 to 138 the chain is Cytoplasmic; it reads DRYVAICHPFQYTVIMSWR. The helical transmembrane segment at 139–157 threads the bilayer; that stretch reads VCTILVLTSWSCGFALSLV. Topologically, residues 158–194 are extracellular; the sequence is HEILLLRLPFCGPRDVNHLFCEILSVLKLACADTWVN. Residues 195–218 form a helical membrane-spanning segment; the sequence is QVVIFATCVFVLVGPLSLILVSYM. Over 219 to 235 the chain is Cytoplasmic; sequence HILGAILKIQTKEGRIK. A helical transmembrane segment spans residues 236 to 258; it reads AFSTCSSHLCVVGLFFGIAMVVY. The Extracellular segment spans residues 259–271; it reads MVPDSNQREEQEK. The chain crosses the membrane as a helical span at residues 272-291; sequence MLSLFHSVFNPMLNPLIYSL. Residues 292-310 lie on the Cytoplasmic side of the membrane; the sequence is RNAQLKGALHRALQRKRSM.

The protein belongs to the G-protein coupled receptor 1 family.

It localises to the cell membrane. In terms of biological role, odorant receptor. In Homo sapiens (Human), this protein is Olfactory receptor 2A2 (OR2A2).